The chain runs to 326 residues: tRNA-modifying protein YgfZ (326 aa).

Folate contacts are provided by W27 and W189.

This sequence belongs to the tRNA-modifying YgfZ family.

It is found in the cytoplasm. Its function is as follows. Folate-binding protein involved in regulating the level of ATP-DnaA and in the modification of some tRNAs. It is probably a key factor in regulatory networks that act via tRNA modification, such as initiation of chromosomal replication. This is tRNA-modifying protein YgfZ from Escherichia coli O139:H28 (strain E24377A / ETEC).